Here is a 342-residue protein sequence, read N- to C-terminus: (Lyso)-N-acylphosphatidylethanolamine lipase (342 aa).

Residues 70 to 201 (PLVMVHGFGG…KAVASVLGRS (132 aa)) form the AB hydrolase-1 domain.

This sequence belongs to the peptidase S33 family. ABHD4/ABHD5 subfamily.

The catalysed reaction is N-hexadecanoyl-1,2-di-(9Z-octadecenoyl)-sn-glycero-3-phosphoethanolamine + H2O = N-hexadecanoyl-1-(9Z-octadecenoyl)-sn-glycero-3-phosphoethanolamine + (9Z)-octadecenoate + H(+). The enzyme catalyses an N-acyl-1,2-diacyl-sn-glycero-3-phosphoethanolamine + H2O = N,1-diacyl-sn-glycero-3-phosphoethanolamine + a fatty acid + H(+). It carries out the reaction N-hexadecanoyl-1-(9Z-octadecenoyl)-sn-glycero-3-phosphoethanolamine + H2O = N-hexadecanoyl-sn-glycero-3-phosphoethanolamine + (9Z)-octadecenoate + H(+). It catalyses the reaction N-octadecanoyl-1-(9Z-octadecenoyl)-sn-glycero-3-phosphoethanolamine + H2O = N-octadecanoyl-sn-glycero-3-phospho-ethanolamine + (9Z)-octadecenoate + H(+). The catalysed reaction is N-eicosanoyl-1-(9Z-octadecenoyl)-sn-glycero-3-phosphoethanolamine + H2O = N-eicosanoyl-sn-glycero-3-phosphoethanolamine + (9Z)-octadecenoate + H(+). The enzyme catalyses N,1-di-(9Z-octadecenoyl)-sn-glycero-3-phosphoethanolamine + H2O = N-(9Z-octadecenoyl)-sn-glycero-3-phosphoethanolamine + (9Z)-octadecenoate + H(+). It carries out the reaction N-(5Z,8Z,11Z,14Z-eicosatetraenoyl)-1-(9Z-octadecenoyl)-sn-glycero-3-phosphoethanolamine + H2O = N-(5Z,8Z,11Z,14Z-eicosatetraenoyl)-sn-glycero-3-phosphoethanolamine + (9Z)-octadecenoate + H(+). It catalyses the reaction 1-octadecanoyl-2-(9Z-octadecenoyl)-sn-glycero-3-phospho-(N-hexadecanoyl)-serine + H2O = 1-octadecanoyl-2-hydroxy-sn-glycero-3-phospho-(N-hexadecanoyl)-serine + (9Z)-octadecenoate + H(+). The catalysed reaction is 1-O-(1Z-octadecenoyl)-2-(9Z-octadecenoyl)-sn-glycero-3-phospho-N-hexadecanoyl-ethanolamine + H2O = 1-O-(1Z-octadecenyl)-sn-glycero-3-phospho-N-hexadecanoyl-ethanolamine + (9Z)-octadecenoate + H(+). The enzyme catalyses N,1-diacyl-sn-glycero-3-phosphoethanolamine + H2O = N-acyl-sn-glycero-3-phosphoethanolamine + a fatty acid + H(+). Its function is as follows. Lysophospholipase selective for N-acyl phosphatidylethanolamine (NAPE). Contributes to the biosynthesis of N-acyl ethanolamines, including the endocannabinoid anandamide by hydrolyzing the sn-1 and sn-2 acyl chains from N-acyl phosphatidylethanolamine (NAPE) generating glycerophospho-N-acyl ethanolamine (GP-NAE), an intermediate for N-acyl ethanolamine biosynthesis. Hydrolyzes substrates bearing saturated, monounsaturated, polyunsaturated N-acyl chains. Shows no significant activity towards other lysophospholipids, including lysophosphatidylcholine, lysophosphatidylethanolamine and lysophosphatidylserine. In Homo sapiens (Human), this protein is (Lyso)-N-acylphosphatidylethanolamine lipase.